The sequence spans 311 residues: Methionyl-tRNA formyltransferase (311 aa).

112 to 115 (SLLP) lines the (6S)-5,6,7,8-tetrahydrofolate pocket.

The protein belongs to the Fmt family.

It catalyses the reaction L-methionyl-tRNA(fMet) + (6R)-10-formyltetrahydrofolate = N-formyl-L-methionyl-tRNA(fMet) + (6S)-5,6,7,8-tetrahydrofolate + H(+). Its function is as follows. Attaches a formyl group to the free amino group of methionyl-tRNA(fMet). The formyl group appears to play a dual role in the initiator identity of N-formylmethionyl-tRNA by promoting its recognition by IF2 and preventing the misappropriation of this tRNA by the elongation apparatus. This is Methionyl-tRNA formyltransferase from Bradyrhizobium sp. (strain ORS 278).